Here is a 202-residue protein sequence, read N- to C-terminus: Phospholipase A2 inhibitor gamma subunit A (202 aa).

An N-terminal signal peptide occupies residues 1 to 19 (MKSLQIICLLFIFVARGSC). Intrachain disulfides connect Cys22–Cys47, Cys25–Cys32, Cys40–Cys68, Cys74–Cys95, Cys96–Cys101, Cys119–Cys144, Cys137–Cys166, and Cys170–Cys192. Asn177 carries N-linked (GlcNAc...) asparagine glycosylation.

The protein belongs to the CNF-like-inhibitor family. As to quaternary structure, heterodimer of subunit A and subunit B. Post-translationally, N-glycosylated. Expressed by the liver. Not expressed in esophagus, stomach, pancreas, spleen, gall bladder, small intestine, rectum, kidney, trachea, lung, testis and body fat.

The protein localises to the secreted. In terms of biological role, inhibits the enzymatic activity of all phospholipase A2 (PA2) groups. This is Phospholipase A2 inhibitor gamma subunit A from Elaphe quadrivirgata (Japanese four-lined ratsnake).